Consider the following 295-residue polypeptide: Beta-lactamase-like protein 2 homolog (295 aa).

Zn(2+) contacts are provided by histidine 79, histidine 81, aspartate 83, histidine 84, histidine 141, aspartate 160, and histidine 195.

Belongs to the metallo-beta-lactamase superfamily. Glyoxalase II family.

The sequence is that of Beta-lactamase-like protein 2 homolog from Caenorhabditis elegans.